Reading from the N-terminus, the 141-residue chain is Nucleoside diphosphate kinase (141 aa).

Residues Lys11, Phe59, Arg87, Thr93, Arg104, and Asn114 each coordinate ATP. His117 acts as the Pros-phosphohistidine intermediate in catalysis.

It belongs to the NDK family. As to quaternary structure, homotetramer. The cofactor is Mg(2+).

The protein resides in the cytoplasm. It carries out the reaction a 2'-deoxyribonucleoside 5'-diphosphate + ATP = a 2'-deoxyribonucleoside 5'-triphosphate + ADP. The catalysed reaction is a ribonucleoside 5'-diphosphate + ATP = a ribonucleoside 5'-triphosphate + ADP. In terms of biological role, major role in the synthesis of nucleoside triphosphates other than ATP. The ATP gamma phosphate is transferred to the NDP beta phosphate via a ping-pong mechanism, using a phosphorylated active-site intermediate. The sequence is that of Nucleoside diphosphate kinase from Pseudomonas syringae pv. tomato (strain ATCC BAA-871 / DC3000).